Reading from the N-terminus, the 183-residue chain is Holliday junction branch migration complex subunit RuvA (183 aa).

Residues 1–63 form a domain I region; sequence MIVGLIGVVE…EDANLLYGFL (63 aa). The interval 64-139 is domain II; the sequence is EESEKILFER…FFIQDENRPA (76 aa). A region of interest (flexible linker) is located at residue Ala-139. Residues 139-183 are domain III; that stretch reads ARNEVFLALESLGFKSAEINKVLKTLKPNLSIEAAIKEALQQLRS.

It belongs to the RuvA family. In terms of assembly, homotetramer. Forms an RuvA(8)-RuvB(12)-Holliday junction (HJ) complex. HJ DNA is sandwiched between 2 RuvA tetramers; dsDNA enters through RuvA and exits via RuvB. An RuvB hexamer assembles on each DNA strand where it exits the tetramer. Each RuvB hexamer is contacted by two RuvA subunits (via domain III) on 2 adjacent RuvB subunits; this complex drives branch migration. In the full resolvosome a probable DNA-RuvA(4)-RuvB(12)-RuvC(2) complex forms which resolves the HJ.

The protein resides in the cytoplasm. In terms of biological role, the RuvA-RuvB-RuvC complex processes Holliday junction (HJ) DNA during genetic recombination and DNA repair, while the RuvA-RuvB complex plays an important role in the rescue of blocked DNA replication forks via replication fork reversal (RFR). RuvA specifically binds to HJ cruciform DNA, conferring on it an open structure. The RuvB hexamer acts as an ATP-dependent pump, pulling dsDNA into and through the RuvAB complex. HJ branch migration allows RuvC to scan DNA until it finds its consensus sequence, where it cleaves and resolves the cruciform DNA. The polypeptide is Holliday junction branch migration complex subunit RuvA (Helicobacter pylori (strain HPAG1)).